A 386-amino-acid chain; its full sequence is ADP,ATP carrier protein, mitochondrial (386 aa).

Residues 1–77 (MADMNQHPTV…SNASPVFVQA (77 aa)) constitute a mitochondrion transit peptide. Solcar repeat units follow at residues 84–177 (AAFA…FKRL), 189–281 (KWFA…LKPV), and 289–375 (DSFF…LQVL). A run of 5 helical transmembrane segments spans residues 86–113 (FATD…VKLL), 154–178 (TANV…KRLF), 187–207 (YWKW…SSLF), 257–278 (FNIS…YDSL), and 292–312 (FASF…SYPI). The ADP site is built by arginine 159 and lysine 171. Position 316 (arginine 316) interacts with ADP. Residues 316–321 (RRRMMM) form an important for transport activity region. The Nucleotide carrier signature motif signature appears at 316–321 (RRRMMM). The chain crosses the membrane as a helical span at residues 352-372 (AGANILRAVAGAGVLAGYDKL).

This sequence belongs to the mitochondrial carrier (TC 2.A.29) family. Monomer.

It localises to the mitochondrion inner membrane. The catalysed reaction is ADP(in) + ATP(out) = ADP(out) + ATP(in). The matrix-open state (m-state) is inhibited by the membrane-permeable bongkrekic acid (BKA). The cytoplasmic-open state (c-state) is inhibited by the membrane-impermeable toxic inhibitor carboxyatractyloside (CATR). In terms of biological role, ADP:ATP antiporter that mediates import of ADP into the mitochondrial matrix for ATP synthesis, and export of ATP out to fuel the cell. Cycles between the cytoplasmic-open state (c-state) and the matrix-open state (m-state): operates by the alternating access mechanism with a single substrate-binding site intermittently exposed to either the cytosolic (c-state) or matrix (m-state) side of the inner mitochondrial membrane. The protein is ADP,ATP carrier protein, mitochondrial (ANT) of Solanum tuberosum (Potato).